The chain runs to 332 residues: Methionine synthase (332 aa).

Residues histidine 211, cysteine 213, and cysteine 296 each coordinate Zn(2+).

Belongs to the archaeal MetE family. It depends on Zn(2+) as a cofactor.

The protein operates within amino-acid biosynthesis; L-methionine biosynthesis via de novo pathway. Functionally, catalyzes the transfer of a methyl group to L-homocysteine resulting in methionine formation. The physiological methyl donor is unknown. The protein is Methionine synthase of Saccharolobus solfataricus (strain ATCC 35092 / DSM 1617 / JCM 11322 / P2) (Sulfolobus solfataricus).